Consider the following 53-residue polypeptide: Putative defensin-like protein 53 (53 aa).

Cystine bridges form between C12–C51, C16–C40, C26–C49, and C30–C50.

The protein belongs to the DEFL family.

The protein is Putative defensin-like protein 53 of Arabidopsis thaliana (Mouse-ear cress).